The primary structure comprises 126 residues: Profilin (126 aa).

It belongs to the profilin family. As to quaternary structure, occurs in many kinds of cells as a complex with monomeric actin in a 1:1 ratio.

It localises to the cytoplasm. The protein resides in the cytoskeleton. In terms of biological role, binds to actin and affects the structure of the cytoskeleton. At high concentrations, profilin prevents the polymerization of actin, whereas it enhances it at low concentrations. By binding to PIP2, it inhibits the formation of IP3 and DG. The polypeptide is Profilin (Bombyx mori (Silk moth)).